Consider the following 332-residue polypeptide: uncharacterized protein (332 aa).

Belongs to the peptidase U32 family.

This is an uncharacterized protein from Methanocaldococcus jannaschii (strain ATCC 43067 / DSM 2661 / JAL-1 / JCM 10045 / NBRC 100440) (Methanococcus jannaschii).